A 541-amino-acid chain; its full sequence is MAKIIAFDEEARRGLERGLNILADAVKVTLGPRGRNVVLEKKWGAPTITNDGVSIAKEIELDDPYEKIGAELVKEVAKKTDDVAGDGTTTATVLAQALVKEGLRNVAAGADPLSLKRGIEKAVEAVISELLASAKEIETKEEIAATASISAGDPEIGSLIAEALDKVGKEGVITVEESNTFGLELELTEGMRFDKGYISAYFVTDAERQETVLEDPYILIVNSKISNVKELVTVLEKVMQSNKPLLIIAEDIEGEALATLIVNKIRGTFKSVAVKAPGFGDRRKAQLADIAILTGGQVISEEVGLKLENAGLELLGTARKVVVTKDETTIVEGAGDAEQIAGRVAQIRAEIENSDSDYDREKLQERLAKLAGGVAVIKAGAATEVELKERKHRIEDAVRNAKAAVEEGIVAGGGVALIQAGAKAFANLTLQGDEATGANIVKVAIDAPLKQIAFNAGLEPGVVVDKVRGLPSGHGLNAATGVYEDLLAAGVNDPVKVTRSALQNAASIAGLFLTTEAVVADKPEKNAPAPGGDDMGGMGGF.

ATP contacts are provided by residues 29–32, 86–90, Gly-413, 477–479, and Asp-493; these read TLGP, DGTTT, and NAA.

The protein belongs to the chaperonin (HSP60) family. Forms a cylinder of 14 subunits composed of two heptameric rings stacked back-to-back. Interacts with the co-chaperonin GroES.

Its subcellular location is the cytoplasm. The enzyme catalyses ATP + H2O + a folded polypeptide = ADP + phosphate + an unfolded polypeptide.. Functionally, together with its co-chaperonin GroES, plays an essential role in assisting protein folding. The GroEL-GroES system forms a nano-cage that allows encapsulation of the non-native substrate proteins and provides a physical environment optimized to promote and accelerate protein folding. The chain is Chaperonin GroEL 1 from Paenarthrobacter aurescens (strain TC1).